We begin with the raw amino-acid sequence, 188 residues long: Adenine phosphoribosyltransferase (188 aa).

It belongs to the purine/pyrimidine phosphoribosyltransferase family. As to quaternary structure, homodimer.

It is found in the cytoplasm. It catalyses the reaction AMP + diphosphate = 5-phospho-alpha-D-ribose 1-diphosphate + adenine. The protein operates within purine metabolism; AMP biosynthesis via salvage pathway; AMP from adenine: step 1/1. Catalyzes a salvage reaction resulting in the formation of AMP, that is energically less costly than de novo synthesis. This chain is Adenine phosphoribosyltransferase, found in Neisseria meningitidis serogroup B (strain ATCC BAA-335 / MC58).